A 261-amino-acid chain; its full sequence is MLIHPQFDPAAIRFGSFAIHWYGVMYLLAFAQFLLLGRLRIRAPRYQTLGWTYKDLEDLLFAGVLGVVLGGRLGYTLFYMPGYYLANPLSILKIWEGGMSFHGGLLGVLCALLWFAKKRHTSFFVVSDLVAPLIPFGLAFGRLGNFINGELWGRPTDLPWAMIFPMVDSIPRHPSQIYQLLGEGIFLGIVLWIYSSKPRPIGRVSGLFLLGYGICRFLAEFAREPDAFLGLLGLGLSMGQWLCVPMIILGVYLLRRNSTDT.

Transmembrane regions (helical) follow at residues 17 to 37 (FAIHWYGVMYLLAFAQFLLLG), 59 to 79 (LLFAGVLGVVLGGRLGYTLFY), 94 to 114 (IWEGGMSFHGGLLGVLCALLW), and 121 to 141 (TSFFVVSDLVAPLIPFGLAFG). A 1,2-diacyl-sn-glycero-3-phospho-(1'-sn-glycerol) is bound at residue Arg142. 2 consecutive transmembrane segments (helical) span residues 174-194 (PSQIYQLLGEGIFLGIVLWIY) and 228-248 (FLGLLGLGLSMGQWLCVPMII).

It belongs to the Lgt family.

It localises to the cell inner membrane. The enzyme catalyses L-cysteinyl-[prolipoprotein] + a 1,2-diacyl-sn-glycero-3-phospho-(1'-sn-glycerol) = an S-1,2-diacyl-sn-glyceryl-L-cysteinyl-[prolipoprotein] + sn-glycerol 1-phosphate + H(+). Its pathway is protein modification; lipoprotein biosynthesis (diacylglyceryl transfer). Functionally, catalyzes the transfer of the diacylglyceryl group from phosphatidylglycerol to the sulfhydryl group of the N-terminal cysteine of a prolipoprotein, the first step in the formation of mature lipoproteins. The protein is Phosphatidylglycerol--prolipoprotein diacylglyceryl transferase of Polynucleobacter asymbioticus (strain DSM 18221 / CIP 109841 / QLW-P1DMWA-1) (Polynucleobacter necessarius subsp. asymbioticus).